The primary structure comprises 252 residues: Hydroxyacylglutathione hydrolase (252 aa).

Residues His54, His56, Asp58, His59, His111, Asp128, and His166 each contribute to the Zn(2+) site.

Belongs to the metallo-beta-lactamase superfamily. Glyoxalase II family. In terms of assembly, monomer. The cofactor is Zn(2+).

The enzyme catalyses an S-(2-hydroxyacyl)glutathione + H2O = a 2-hydroxy carboxylate + glutathione + H(+). It functions in the pathway secondary metabolite metabolism; methylglyoxal degradation; (R)-lactate from methylglyoxal: step 2/2. Its function is as follows. Thiolesterase that catalyzes the hydrolysis of S-D-lactoyl-glutathione to form glutathione and D-lactic acid. The chain is Hydroxyacylglutathione hydrolase from Vibrio campbellii (strain ATCC BAA-1116).